We begin with the raw amino-acid sequence, 878 residues long: Alanine--tRNA ligase (878 aa).

4 residues coordinate Zn(2+): histidine 567, histidine 571, cysteine 669, and histidine 673.

Belongs to the class-II aminoacyl-tRNA synthetase family. Requires Zn(2+) as cofactor.

It is found in the cytoplasm. It catalyses the reaction tRNA(Ala) + L-alanine + ATP = L-alanyl-tRNA(Ala) + AMP + diphosphate. Functionally, catalyzes the attachment of alanine to tRNA(Ala) in a two-step reaction: alanine is first activated by ATP to form Ala-AMP and then transferred to the acceptor end of tRNA(Ala). Also edits incorrectly charged Ser-tRNA(Ala) and Gly-tRNA(Ala) via its editing domain. This chain is Alanine--tRNA ligase, found in Rickettsia conorii (strain ATCC VR-613 / Malish 7).